The sequence spans 644 residues: NADH-ubiquinone oxidoreductase chain 5 (644 aa).

A run of 18 helical transmembrane segments spans residues 4–23 (FITLPLLNVIISGLLSRYIG), 30–49 (LNIINLFIILILLIYYYINI), 78–100 (DLLSITMLIPIILISLIVNIFAW), 112–129 (FYTYLALFTLFMIILVLG), 133–155 (LILFLGWEYIGIASFLLIGFWYN), 167–189 (LFINKIGDIFFIIALIYLIYIYK), 199–221 (LVSYINIDINNIIILCLVIAASA), 234–256 (WAMAGPTPVSVLLHAATLVIAGI), 271–293 (NILLFNLWLGAITSLISGLIAIN), 300–322 (IIALSTMSQLGIMFISIGLSSYN), 327–349 (HVLCHSLYKALLFICAGTIIHSL), 361–383 (GLLIYMPITYICMLIGSLSLMGL), 398–420 (SSIGIFTISGLIIYWLVVLSSLL), 466–488 (SWMAIICMIILSIGSLFIGYLLQ), 517–539 (INIYYKWIPIFNIFISILLIIYL), 546–568 (LLYIYNNPLFYNFYILFNTRFLF), 594–616 (GFLYTLGPNGLNYLLNLLSFNII), and 623–642 (FNHYLIYISFSLLLFIYLQF).

The protein belongs to the complex I subunit 5 family.

It localises to the mitochondrion inner membrane. It catalyses the reaction a ubiquinone + NADH + 5 H(+)(in) = a ubiquinol + NAD(+) + 4 H(+)(out). Core subunit of the mitochondrial membrane respiratory chain NADH dehydrogenase (Complex I) that is believed to belong to the minimal assembly required for catalysis. Complex I functions in the transfer of electrons from NADH to the respiratory chain. The immediate electron acceptor for the enzyme is believed to be ubiquinone. The polypeptide is NADH-ubiquinone oxidoreductase chain 5 (ND5) (Wickerhamomyces canadensis (Yeast)).